A 270-amino-acid chain; its full sequence is Nodule lectin (270 aa).

The signal sequence occupies residues 1–33 (MAFYRTNLPTRELFSLVSVVIVLLATNINSVQA). A propeptide spanning residues 34–41 (LSFNFTKL) is cleaved from the precursor. The N-linked (GlcNAc...) asparagine glycan is linked to Asn-134.

This sequence belongs to the leguminous lectin family. Post-translationally, glycosylated in a boron-dependent manner. Glycosylation is required for localization to symbiosomes. 3 different glycosylation variants, NLEC-1A, NLEC-1B and NLEC-1C, have been identified. Expressed in nodules of Rhizobium-infected and uninfected roots and in the root stele near the nodule attachment point. In roots which have been colonized by the endomycorrhizal fungus G.versiforme, detected only in cortical cells colonized by the fungus, mainly those containing arbuscules.

Its subcellular location is the symbiosome. It localises to the peribacteroid space. It is found in the peribacteroid membrane. Its function is as follows. Involved in symbiosome development. The chain is Nodule lectin (NLEC1) from Pisum sativum (Garden pea).